The primary structure comprises 222 residues: Deoxyribose-phosphate aldolase (222 aa).

The active-site Proton donor/acceptor is D89. K152 (schiff-base intermediate with acetaldehyde) is an active-site residue. K181 serves as the catalytic Proton donor/acceptor.

Belongs to the DeoC/FbaB aldolase family. DeoC type 1 subfamily.

The protein resides in the cytoplasm. The catalysed reaction is 2-deoxy-D-ribose 5-phosphate = D-glyceraldehyde 3-phosphate + acetaldehyde. It participates in carbohydrate degradation; 2-deoxy-D-ribose 1-phosphate degradation; D-glyceraldehyde 3-phosphate and acetaldehyde from 2-deoxy-alpha-D-ribose 1-phosphate: step 2/2. Its function is as follows. Catalyzes a reversible aldol reaction between acetaldehyde and D-glyceraldehyde 3-phosphate to generate 2-deoxy-D-ribose 5-phosphate. The sequence is that of Deoxyribose-phosphate aldolase from Alkaliphilus oremlandii (strain OhILAs) (Clostridium oremlandii (strain OhILAs)).